Reading from the N-terminus, the 127-residue chain is GPVGTGDSKCPLMVKVLDAVRGSPAVDVSVHVFKKAADETWEPFASGKTSKTGELHGLTTSEKFVEGVYKVELDTKSYWKALGISPFHEYAEVVFTANDSGHRSYTIAALLSPFSYSTTAVVSNPQE.

Cysteine 10 is subject to Sulfocysteine. L-thyroxine is bound at residue lysine 15. Glutamate 42 is modified (4-carboxyglutamate). Glutamate 54 serves as a coordination point for L-thyroxine. Residue asparagine 98 is glycosylated (N-linked (GlcNAc...) asparagine). Serine 117 is a binding site for L-thyroxine.

The protein belongs to the transthyretin family. Homotetramer. Dimer of dimers. In the homotetramer, subunits assemble around a central channel that can accommodate two ligand molecules. Interacts with RBP4. Sulfonation of the reactive cysteine Cys-10 enhances the stability of the native conformation of TTR, avoiding misassembly of the protein leading to amyloid formation. In terms of tissue distribution, detected in serum (at protein level).

It localises to the secreted. In terms of biological role, thyroid hormone-binding protein. Probably transports thyroxine from the bloodstream to the brain. This is Transthyretin (TTR) from Oryctolagus cuniculus (Rabbit).